The primary structure comprises 539 residues: Chaperonin GroEL 2 (539 aa).

ATP is bound by residues 30 to 33, K51, 87 to 91, G415, 480 to 482, and D496; these read TLGP, DGTTT, and NAA.

The protein belongs to the chaperonin (HSP60) family. As to quaternary structure, forms a cylinder of 14 subunits composed of two heptameric rings stacked back-to-back. Interacts with the co-chaperonin GroES.

It localises to the cytoplasm. The catalysed reaction is ATP + H2O + a folded polypeptide = ADP + phosphate + an unfolded polypeptide.. In terms of biological role, together with its co-chaperonin GroES, plays an essential role in assisting protein folding. The GroEL-GroES system forms a nano-cage that allows encapsulation of the non-native substrate proteins and provides a physical environment optimized to promote and accelerate protein folding. This is Chaperonin GroEL 2 from Sphingopyxis alaskensis (strain DSM 13593 / LMG 18877 / RB2256) (Sphingomonas alaskensis).